Reading from the N-terminus, the 393-residue chain is Meiotic driver wtf19 (393 aa).

Residues 1 to 98 form a disordered region; it reads MKNKYYPLRS…SSGTADNSST (98 aa). Residues 11–29 show a composition bias toward basic and acidic residues; it reads SMDELSAKNDNEIDLEKGP. Polar residues-rich tracts occupy residues 57–72 and 89–98; these read GANN…STTP and SSGTADNSST. Transmembrane regions (helical) follow at residues 104-124, 137-157, 167-187, 208-228, 233-253, 269-289, 296-316, and 332-352; these read AFLS…YLTY, WVYF…LWYF, VTVI…AQCV, CVKV…IGLF, EMMI…FGCV, CTIS…FWTF, LAKV…TMFL, and VLFI…GALI.

The protein belongs to the WTF family. In terms of assembly, homomer. Forms protein aggregates. The two isoforms can interact with each other and with themselves. High sequence similarity is required for their interaction.

The protein localises to the spore membrane. Its subcellular location is the vacuole membrane. It localises to the ascus epiplasm. It is found in the cytoplasm. The protein resides in the endoplasmic reticulum membrane. In terms of biological role, promotes unequal transmission of alleles from the parental zygote to progeny spores by acting as poison/antidote system where the poison and antidote proteins are produced from the same locus; the poison component is trans-acting and targets all spores within an ascus whereas the antidote component is spore-specific, leading to poisoning of all progeny that do not inherit the allele. Functionally, localizes isoform 2 to the vacuole thereby facilitating its degradation. Forms toxic aggregates that disrupt spore maturation. The protein is Meiotic driver wtf19 of Schizosaccharomyces pombe (strain 972 / ATCC 24843) (Fission yeast).